Reading from the N-terminus, the 167-residue chain is EF-hand calcium-binding domain-containing protein 11 (167 aa).

EF-hand domains lie at 17-52, 91-126, and 127-162; these read AERKKIELVFHQCDVDKKGYMSREDLKIAVVMLFGY, DPYEKARQIFSAFDVHCRGFLKLDDFKSAFKRVAPR, and LQERTVLEAFRHADQDSDGHISFKDFENIISYGLAN. Ca(2+)-binding residues include aspartate 140, aspartate 142, aspartate 144, histidine 146, and aspartate 151.

This chain is EF-hand calcium-binding domain-containing protein 11 (efcab11), found in Danio rerio (Zebrafish).